The primary structure comprises 394 residues: 8-amino-7-oxononanoate synthase (394 aa).

Residue Arg-21 participates in substrate binding. 112–113 (GY) provides a ligand contact to pyridoxal 5'-phosphate. Residue His-137 participates in substrate binding. Residues Ser-183, His-211, and Thr-239 each contribute to the pyridoxal 5'-phosphate site. An N6-(pyridoxal phosphate)lysine modification is found at Lys-242. Position 358 (Thr-358) interacts with substrate.

It belongs to the class-II pyridoxal-phosphate-dependent aminotransferase family. BioF subfamily. Homodimer. It depends on pyridoxal 5'-phosphate as a cofactor.

The catalysed reaction is 6-carboxyhexanoyl-[ACP] + L-alanine + H(+) = (8S)-8-amino-7-oxononanoate + holo-[ACP] + CO2. It participates in cofactor biosynthesis; biotin biosynthesis. In terms of biological role, catalyzes the decarboxylative condensation of pimeloyl-[acyl-carrier protein] and L-alanine to produce 8-amino-7-oxononanoate (AON), [acyl-carrier protein], and carbon dioxide. In Burkholderia pseudomallei (strain K96243), this protein is 8-amino-7-oxononanoate synthase.